Reading from the N-terminus, the 248-residue chain is Protein UL24 homolog (248 aa).

Residues 194–248 (DRPRPTAQGHRPRTHVGPKPSQLTARVPRSARAGRAGGRKGQVGAVGQVCPGAQK) are disordered. Residues 218-227 (ARVPRSARAG) are compositionally biased toward low complexity.

It belongs to the herpesviridae UL24 family.

It localises to the virion. The protein resides in the host cytoplasm. It is found in the host nucleus. Its subcellular location is the host nucleolus. The protein localises to the host Golgi apparatus. Its function is as follows. May participate in nuclear egress of viral particles. Plays a role in the dispersal of several host nucleolar proteins including NCL/nucleolin and NPM1. Since deletion of host NCL/nucleolin negatively impact on nuclear egress, UL24 supposedly acts on this process through its effect on host nucleoli. The polypeptide is Protein UL24 homolog (Homo sapiens (Human)).